The chain runs to 310 residues: N-acetylmuramic acid 6-phosphate etherase (310 aa).

Positions 64 to 227 (ITSRLKSNGR…STSVMIKLGK (164 aa)) constitute an SIS domain. The active-site Proton donor is E92. Residue E123 is part of the active site.

It belongs to the GCKR-like family. MurNAc-6-P etherase subfamily. In terms of assembly, homodimer.

It catalyses the reaction N-acetyl-D-muramate 6-phosphate + H2O = N-acetyl-D-glucosamine 6-phosphate + (R)-lactate. Its pathway is amino-sugar metabolism; N-acetylmuramate degradation. Functionally, specifically catalyzes the cleavage of the D-lactyl ether substituent of MurNAc 6-phosphate, producing GlcNAc 6-phosphate and D-lactate. The chain is N-acetylmuramic acid 6-phosphate etherase from Prochlorococcus marinus (strain NATL2A).